The sequence spans 1066 residues: Hemoglobin and hemoglobin-haptoglobin-binding protein C (1066 aa).

Positions 1 to 24 are cleaved as a signal peptide; that stretch reads MTNFKFTLLARSIAFALNASTAYA. 7 repeat units span residues 26 to 29, 30 to 33, 34 to 37, 38 to 41, 42 to 45, 46 to 49, and 50 to 53. The segment at 26–53 is 7 X 4 AA tandem repeats of Q-P-T-N; the sequence is QPTNQPTNQPTNQPTNQPTNQPTNQPTN. Over residues 26–54 the composition is skewed to low complexity; it reads QPTNQPTNQPTNQPTNQPTNQPTNQPTNQ. A disordered region spans residues 26–57; that stretch reads QPTNQPTNQPTNQPTNQPTNQPTNQPTNQDSN. The short motif at 63–70 is the TonB box element; sequence EQINVSGS. The region spanning 66–200 is the TBDR plug domain; sequence NVSGSTETIN…LGGSVIFETK (135 aa). Residues 208 to 1066 enclose the TBDR beta-barrel domain; it reads DKDYYVSYKR…NYRMSVQFEF (859 aa). The TonB C-terminal box motif lies at 1049 to 1066; sequence NRLYAPGRNYRMSVQFEF.

It belongs to the TonB-dependent receptor family. Hemoglobin/haptoglobin binding protein subfamily.

The protein resides in the cell outer membrane. Acts as a receptor for hemoglobin or the hemoglobin/haptoglobin complex of the human host and is required for heme uptake. This is Hemoglobin and hemoglobin-haptoglobin-binding protein C (hgpC) from Haemophilus influenzae.